The sequence spans 422 residues: UDP-N-acetylglucosamine 1-carboxyvinyltransferase (422 aa).

22–23 (KN) provides a ligand contact to phosphoenolpyruvate. Arg-92 contributes to the UDP-N-acetyl-alpha-D-glucosamine binding site. The Proton donor role is filled by Cys-116. Cys-116 is modified (2-(S-cysteinyl)pyruvic acid O-phosphothioketal). UDP-N-acetyl-alpha-D-glucosamine-binding positions include 121–125 (RPVDQ), Asp-305, and Ile-327.

The protein belongs to the EPSP synthase family. MurA subfamily.

It localises to the cytoplasm. It catalyses the reaction phosphoenolpyruvate + UDP-N-acetyl-alpha-D-glucosamine = UDP-N-acetyl-3-O-(1-carboxyvinyl)-alpha-D-glucosamine + phosphate. The protein operates within cell wall biogenesis; peptidoglycan biosynthesis. In terms of biological role, cell wall formation. Adds enolpyruvyl to UDP-N-acetylglucosamine. The protein is UDP-N-acetylglucosamine 1-carboxyvinyltransferase of Sorangium cellulosum (strain So ce56) (Polyangium cellulosum (strain So ce56)).